A 156-amino-acid chain; its full sequence is NADH-ubiquinone oxidoreductase 20 kDa subunit (156 aa).

Residues C33, C34, C98, and C128 each coordinate [4Fe-4S] cluster.

This sequence belongs to the complex I 20 kDa subunit family. The cofactor is [4Fe-4S] cluster.

It is found in the mitochondrion. It catalyses the reaction a ubiquinone + NADH + 5 H(+)(in) = a ubiquinol + NAD(+) + 4 H(+)(out). In Paramecium tetraurelia, this protein is NADH-ubiquinone oxidoreductase 20 kDa subunit (NAD10).